The primary structure comprises 333 residues: Casein kinase II subunit alpha-2 (333 aa).

Residues 34-319 enclose the Protein kinase domain; the sequence is YEVVRKVGRG…AREAMAHPYF (286 aa). ATP contacts are provided by residues 40-48 and K63; that span reads VGRGKYSEV. D151 serves as the catalytic Proton acceptor.

Belongs to the protein kinase superfamily. Ser/Thr protein kinase family. CK2 subfamily. As to quaternary structure, monomer. In terms of processing, autophosphorylated.

Its subcellular location is the cytoplasm. The catalysed reaction is L-seryl-[protein] + ATP = O-phospho-L-seryl-[protein] + ADP + H(+). It carries out the reaction L-threonyl-[protein] + ATP = O-phospho-L-threonyl-[protein] + ADP + H(+). In terms of biological role, casein kinases are operationally defined by their preferential utilization of acidic proteins such as caseins as substrates. It can phosphorylate a large number of proteins. Involved in photoperiod sensitivity (PS). Increases days-to-heading under natural day (ND) and long day (LD) conditions, but not under short day (SD) conditions. This chain is Casein kinase II subunit alpha-2, found in Oryza sativa subsp. indica (Rice).